Reading from the N-terminus, the 569-residue chain is Myotubularin-related protein 9 (569 aa).

The 380-residue stretch at 134–513 (GWSAFDLEQE…QCIKIWDRLF (380 aa)) folds into the Myotubularin phosphatase domain.

The protein belongs to the protein-tyrosine phosphatase family. Non-receptor class myotubularin subfamily. Heterodimer with lipid phosphatase mtm-6.

Its subcellular location is the cytoplasm. It is found in the membrane. Its function is as follows. May act as a regulatory subunit for mtm-6. In association with phosphatase mtm-6, plays a role in endosome trafficking probably by regulating phosphatidylinositol-3-phosphate levels. Regulates fluid phase endocytosis in coelomocytes. Regulates posterior migration of QL neuroblast descendants and the anterior migration of QR neuroblast descendants and HSN neurons during larval development probably by controlling Wnt ligand secretion through the regulation of sorting receptor mig-14 trafficking. Involved in the formation of correct synapse number in DA9 motor neurons. The sequence is that of Myotubularin-related protein 9 from Caenorhabditis elegans.